Reading from the N-terminus, the 209-residue chain is MGRRKRRPGSRRWLDEHHSDHWVQQAQKAGYRSRAAFKLLEIQEKDRLIRPGMTVVDLGAAPGGWCQVAAELVGDRGAVFALDILPMEALPGVHVIQGDFTEEAPLQALLQALEGRPVDLVLSDMAPNLSGVRVVDQPRAMYLAELALDFAGQVLQPGGDFLTKVFHGEGLDDYRRDLQRQFSKVITRKPRASRARSRESYLLARGFGL.

The S-adenosyl-L-methionine site is built by G63, W65, D83, D99, and D124. K164 (proton acceptor) is an active-site residue.

Belongs to the class I-like SAM-binding methyltransferase superfamily. RNA methyltransferase RlmE family.

Its subcellular location is the cytoplasm. The enzyme catalyses uridine(2552) in 23S rRNA + S-adenosyl-L-methionine = 2'-O-methyluridine(2552) in 23S rRNA + S-adenosyl-L-homocysteine + H(+). Its function is as follows. Specifically methylates the uridine in position 2552 of 23S rRNA at the 2'-O position of the ribose in the fully assembled 50S ribosomal subunit. The chain is Ribosomal RNA large subunit methyltransferase E from Alkalilimnicola ehrlichii (strain ATCC BAA-1101 / DSM 17681 / MLHE-1).